An 880-amino-acid chain; its full sequence is 3-isopropylmalate dehydratase large subunit gloJ (880 aa).

3 residues coordinate [4Fe-4S] cluster: Cys457, Cys520, and Cys523.

It belongs to the aconitase/IPM isomerase family. LeuC type 2 subfamily. [4Fe-4S] cluster is required as a cofactor.

The enzyme catalyses (2R,3S)-3-isopropylmalate = (2S)-2-isopropylmalate. It functions in the pathway mycotoxin biosynthesis. Its function is as follows. 3-isopropylmalate dehydratase large subunit; part of the gene cluster that mediates the biosynthesis of pneumocandins, lipohexapeptides of the echinocandin family that prevent fungal cell wall formation by non-competitive inhibition of beta-1,3-glucan synthase. The 10,12-dimethylmyristoyl side chain is synthesized by the reducing polyketide synthase gloL/GLPKS4. The thioesterase gloN/GLHYD exclusively interacts with gloL/GLPKS4 to maintain turnover of the polyketide side chain. The 10R,12S-dimethylmyristic acid is then transferred to the first thiolation domain of the nonribosomal peptide synthetase gloA/GLNRPS4 by the acyl-AMP ligase gloD/GLligase, followed by its acylation to L-ornithine to trigger elongation of the cyclic hexapeptide. L-ornithine, 4R-hydroxyl-L-proline (generated from L-proline by the dioxygenase gloF/GLOXY2), 3S-hydroxyl-L-homotyrosine (generated by gloG/GLHtyB, gloH/GLHtyA, gloI/GLHtyC, gloJ/GLHtyD and hydroxylated at C-3 by the dioxygenase gloM/GLOXY1), 3R-hydroxyl-L-glutamine (generated from L-glutamine probably by the dioxygenase gloE/GLOXY3) and 3S-hydroxyl-L-proline (generated from L-proline by the dioxygenase gloF/GLOXY2 to yield pneumocandin B0), or 3S-hydroxyl-4S-methyl-L-proline (generated from L-leucine by the dioxygenase gloC/GLOXY4 to yield pneumocandin A0) are sequentially added to the growing chain. The last C domain of gloA/GLNRPS4 is proposed to be responsible for cyclization by condensation to form the peptide bond between L-ornithine and 3S-hydroxyl-4S-methyl-L-proline (for pneumocandin A0) or 3S-hydroxyl-L-proline (for pneumocandin B0). Finally, the subsequent C-4 hydroxylation of 3S-hydroxyl-L-homotyrosine and L-ornithine dihydroxylation at C-4 and C-5 are performed by the cytochrome P450 monooxygenases gloP/GLP450-1 and gloO/GLP450-2, respectively. This Glarea lozoyensis (strain ATCC 20868 / MF5171) protein is 3-isopropylmalate dehydratase large subunit gloJ.